We begin with the raw amino-acid sequence, 391 residues long: 3-ketoacyl-CoA thiolase (391 aa).

Cys95 functions as the Acyl-thioester intermediate in the catalytic mechanism. Catalysis depends on proton acceptor residues His347 and Cys377.

Belongs to the thiolase-like superfamily. Thiolase family. As to quaternary structure, heterotetramer of two alpha chains (FadB) and two beta chains (FadA).

It is found in the cytoplasm. The catalysed reaction is an acyl-CoA + acetyl-CoA = a 3-oxoacyl-CoA + CoA. It participates in lipid metabolism; fatty acid beta-oxidation. Functionally, catalyzes the final step of fatty acid oxidation in which acetyl-CoA is released and the CoA ester of a fatty acid two carbons shorter is formed. The sequence is that of 3-ketoacyl-CoA thiolase from Pseudomonas fluorescens (strain ATCC BAA-477 / NRRL B-23932 / Pf-5).